Here is a 73-residue protein sequence, read N- to C-terminus: Neurogranin (73 aa).

Residues 26 to 55 enclose the IQ domain; that stretch reads ANAAAAKIQASFRGHMTRKKIKGGEIDRKT. A Phosphoserine; by PKC modification is found at Ser36. The segment covering 47–59 has biased composition (basic and acidic residues); the sequence is KGGEIDRKTKDAE. Residues 47-73 form a disordered region; sequence KGGEIDRKTKDAECANSTRGGDLRNGD.

Belongs to the neurogranin family.

Functionally, acts as a 'third messenger' substrate of protein kinase C-mediated molecular cascades during synaptic development and remodeling. Binds to calmodulin in the absence of calcium. The polypeptide is Neurogranin (NRGN) (Serinus canaria (Island canary)).